Here is a 569-residue protein sequence, read N- to C-terminus: MAKNDNELYKGLDDLERNKGESNYLRGTIVEGLNDPITGAIAEDDTKLLKFHGSYMQDDRDLRQERRKQKLEPLYAFMIRVRIPGGKVSTDQWLKLDALADNYAGEQIRLTTRQTMQYHGILKRNLKKSMQSIHDAVLDSIAACGDVTRNVMCNPNPYQSDIYAEVNRAADSISEHLLPKTTAYHEIWLDGEKVVDTKKEDHEPMYGKTYLPRKFKIGIAVPPSNDIDVYSQDIGLIGIVENDELIGYNVSVGGGMGMKHDDLRTYPQVGKVIGFIPKDKAEEVCEKILTIQRDYGDRSDRMQARFKYTVDRKGLDWIKQELNDRLGWELEEAKSFEFEDNGDRLGWTEGSGKHHYTLFIQNGRIKDTEDFKLKTAIKELAKVHKGDFRMTPNQNLIIANVDEKDKPEIQKIIDNYGLTDGKNYSGLRRNSMACVAFPTCGLAMAESERYLPSLVGKIEDLLDEFGLSEEEITIRMTGCPNGCARPALAEISFIGKAPGKYNFYLGGSFKGDRLNKLYKENIGEKEILESLRPILEQYSKEREKGEHFGDFVVRKGIVEKVTDGRDFRG.

The [4Fe-4S] cluster site is built by Cys-434, Cys-440, Cys-479, and Cys-483. Cys-483 provides a ligand contact to siroheme.

The protein belongs to the nitrite and sulfite reductase 4Fe-4S domain family. Alpha(8)-beta(8). The alpha component is a flavoprotein, the beta component is a hemoprotein. It depends on siroheme as a cofactor. [4Fe-4S] cluster serves as cofactor.

It catalyses the reaction hydrogen sulfide + 3 NADP(+) + 3 H2O = sulfite + 3 NADPH + 4 H(+). It participates in sulfur metabolism; hydrogen sulfide biosynthesis; hydrogen sulfide from sulfite (NADPH route): step 1/1. Component of the sulfite reductase complex that catalyzes the 6-electron reduction of sulfite to sulfide. This is one of several activities required for the biosynthesis of L-cysteine from sulfate. The chain is Sulfite reductase [NADPH] hemoprotein beta-component from Staphylococcus carnosus (strain TM300).